Consider the following 190-residue polypeptide: Xanthine phosphoribosyltransferase (190 aa).

Positions 20 and 27 each coordinate xanthine. A 5-phospho-alpha-D-ribose 1-diphosphate-binding site is contributed by alanine 128 to alanine 132. Lysine 156 serves as a coordination point for xanthine.

This sequence belongs to the purine/pyrimidine phosphoribosyltransferase family. Xpt subfamily. As to quaternary structure, homodimer.

It localises to the cytoplasm. It catalyses the reaction XMP + diphosphate = xanthine + 5-phospho-alpha-D-ribose 1-diphosphate. It functions in the pathway purine metabolism; XMP biosynthesis via salvage pathway; XMP from xanthine: step 1/1. Converts the preformed base xanthine, a product of nucleic acid breakdown, to xanthosine 5'-monophosphate (XMP), so it can be reused for RNA or DNA synthesis. The protein is Xanthine phosphoribosyltransferase of Ectopseudomonas mendocina (strain ymp) (Pseudomonas mendocina).